A 357-amino-acid polypeptide reads, in one-letter code: Molybdenum import ATP-binding protein ModC (357 aa).

Residues 1–233 enclose the ABC transporter domain; sequence MRLEVEARLR…PFPTSGPGRR (233 aa). 31 to 38 is a binding site for ATP; sequence GRSGSGKT. The Mop domain occupies 293–357; that stretch reads GISALNVLPG…AVVKTVALDY (65 aa).

It belongs to the ABC transporter superfamily. Molybdate importer (TC 3.A.1.8) family. As to quaternary structure, the complex is composed of two ATP-binding proteins (ModC), two transmembrane proteins (ModB) and a solute-binding protein (ModA).

The protein resides in the cell inner membrane. It carries out the reaction molybdate(out) + ATP + H2O = molybdate(in) + ADP + phosphate + H(+). Its function is as follows. Part of the ABC transporter complex ModABC involved in molybdenum import. Responsible for energy coupling to the transport system. The polypeptide is Molybdenum import ATP-binding protein ModC (Rhizobium meliloti (strain 1021) (Ensifer meliloti)).